Here is a 486-residue protein sequence, read N- to C-terminus: CDT1-like protein b (486 aa).

2 disordered regions span residues P273 to S294 and V348 to D371. Positions L281 to S294 are enriched in polar residues. The segment covering V348–Y363 has biased composition (basic and acidic residues).

This sequence belongs to the Cdt1 family. Expressed in proliferating (e.g. shoot and root apical meristems, organ primordia, guard cells and stomatal lineage) and endoreplicating cells (e.g. developing trichomes).

It localises to the nucleus. Member of the pre-replication complex. Regulates endoreduplication. Involved in the coordination of cell and plastid division. This Arabidopsis thaliana (Mouse-ear cress) protein is CDT1-like protein b (CDT1B).